A 257-amino-acid chain; its full sequence is Glutamate racemase (257 aa).

Residues 12–13 (DS) and 44–45 (YG) each bind substrate. C75 serves as the catalytic Proton donor/acceptor. Residue 76 to 77 (NT) coordinates substrate. Catalysis depends on C176, which acts as the Proton donor/acceptor. 177–178 (TH) contributes to the substrate binding site.

Belongs to the aspartate/glutamate racemases family.

The catalysed reaction is L-glutamate = D-glutamate. It participates in cell wall biogenesis; peptidoglycan biosynthesis. Its function is as follows. Provides the (R)-glutamate required for cell wall biosynthesis. The polypeptide is Glutamate racemase (Thermus thermophilus (strain ATCC BAA-163 / DSM 7039 / HB27)).